The primary structure comprises 347 residues: L-threonine 3-dehydrogenase (347 aa).

C42 lines the Zn(2+) pocket. Residues T44 and H47 each act as charge relay system in the active site. Residues H67, E68, C97, C100, C103, and C111 each coordinate Zn(2+). NAD(+) is bound by residues I180, D200, R205, 267–269, and 292–293; these read LSL and IT.

This sequence belongs to the zinc-containing alcohol dehydrogenase family. As to quaternary structure, homotetramer. It depends on Zn(2+) as a cofactor.

Its subcellular location is the cytoplasm. The catalysed reaction is L-threonine + NAD(+) = (2S)-2-amino-3-oxobutanoate + NADH + H(+). Its pathway is amino-acid degradation; L-threonine degradation via oxydo-reductase pathway; glycine from L-threonine: step 1/2. In terms of biological role, catalyzes the NAD(+)-dependent oxidation of L-threonine to 2-amino-3-ketobutyrate. The protein is L-threonine 3-dehydrogenase of Bacillus velezensis (strain DSM 23117 / BGSC 10A6 / LMG 26770 / FZB42) (Bacillus amyloliquefaciens subsp. plantarum).